Here is a 722-residue protein sequence, read N- to C-terminus: Transcription factor kayak, isoforms D/sro (722 aa).

Over residues Gln173–His188 the composition is skewed to low complexity. Disordered stretches follow at residues Gln173–Tyr193, Leu283–Ser317, and Gly350–Val407. Over residues Leu283–Gln300 the composition is skewed to polar residues. Low complexity-rich tracts occupy residues Thr308–Ser317 and Gly350–Thr364. One can recognise a bZIP domain in the interval Glu385 to His448. A basic motif region spans residues Lys387 to Arg406. The interval Leu413–Leu420 is leucine-zipper. Low complexity predominate over residues Ala477 to Gly498. Disordered stretches follow at residues Ala477–Leu519 and Asp683–Leu722. Positions Thr506 to Pro516 are enriched in polar residues. Phosphoserine is present on Ser515.

It belongs to the bZIP family. Fos subfamily. Homodimer. Heterodimer with Jra. The kay-Jra heterodimer binds more stably to the AP-1 site than either of the two proteins alone.

It is found in the nucleus. Its function is as follows. Developmentally regulated transcription factor AP-1 binds and recognizes the enhancer DNA sequence: 5'-TGA[CG]TCA-3'. May play a role in the function or determination of a particular subset of cells in the developing embryo. It is able to carry out its function either independently of or in conjunction with Jra. This chain is Transcription factor kayak, isoforms D/sro, found in Drosophila melanogaster (Fruit fly).